Reading from the N-terminus, the 342-residue chain is MRKILPSKLAFGIFDHLDEDGNAMARQYADRLTLAEACDRLGFYAYHLAEHHFSPHGRSPSPNLFLSSVAQRTRQLRLGPLVMLLSLSHPLRAFEEICMLDHLSGGRAELGIGRGSLPIELGYFGIDPDAVAGRYFEASEILMEAMRGGNLSYRGDHFELNNVPLILRPHQRPHPPTWIATNRPESARWAATNGANVACVGPASLVRRITDAFRSEEGLSSDANCNASFLGLLRMIVVGHSAEHAYSLAAPAFQRWLNNFKFLYDLHAIPVPPNLPLTFDAAIESELCVVGTAAVVRRTLLDQLEEAGANYLLCQVAFGDLPLDASLYTAMTIQSELMDRVG.

Belongs to the bacterial luciferase oxidoreductase family.

This is an uncharacterized protein from Sinorhizobium fredii (strain NBRC 101917 / NGR234).